The following is an 83-amino-acid chain: uncharacterized protein (83 aa).

The next 2 helical transmembrane spans lie at phenylalanine 11–leucine 31 and tryptophan 48–methionine 68.

Its subcellular location is the cell membrane. This is an uncharacterized protein from Bacillus subtilis (strain 168).